A 178-amino-acid polypeptide reads, in one-letter code: Large ribosomal subunit protein uL6 (178 aa).

Belongs to the universal ribosomal protein uL6 family. In terms of assembly, part of the 50S ribosomal subunit. Interacts weakly with protein L13.

Its function is as follows. This protein binds to the 23S rRNA, and is important in its secondary structure. It is located near the subunit interface in the base of the L7/L12 stalk, and near the tRNA binding site of the peptidyltransferase center. The sequence is that of Large ribosomal subunit protein uL6 from Haloarcula marismortui (strain ATCC 43049 / DSM 3752 / JCM 8966 / VKM B-1809) (Halobacterium marismortui).